The chain runs to 238 residues: Thrombin-like enzyme gyroxin B2.1 (238 aa).

Residues 1–229 (VIGGDECNIN…HLDWIQNIIA (229 aa)) enclose the Peptidase S1 domain. Disulfide bonds link C7–C141, C28–C44, C78–C236, C120–C190, C152–C169, and C180–C205. The Charge relay system role is filled by H43. N-linked (GlcNAc...) asparagine glycosylation occurs at N81. The Charge relay system role is filled by D88. The active-site Charge relay system is the S184.

Belongs to the peptidase S1 family. Snake venom subfamily. In terms of assembly, monomer. Expressed by the venom gland.

Its subcellular location is the secreted. In terms of biological role, thrombin-like snake venom serine protease. Displays a specificity similar to trypsin. Releases only fibrinopeptide A in the conversion of fibrinogen (FGA) to fibrin. Shows coagulant, esterase and amidase activities. Reversibly increases the permeability of the blood brain barrier (BBB) in mice. Induces the barrel rotation syndrome in mice, which is manifested by gyroxin-like, rapid rolling motions. This syndrome may be due to its effect on BBB permeability, and certainly also to other actions affecting endogenous substrates present in the endothelium, nervous tissues or blood. The chain is Thrombin-like enzyme gyroxin B2.1 from Crotalus durissus terrificus (South American rattlesnake).